Here is a 272-residue protein sequence, read N- to C-terminus: 2-dehydro-3-deoxyphosphooctonate aldolase (272 aa).

The protein belongs to the KdsA family.

The protein localises to the cytoplasm. It carries out the reaction D-arabinose 5-phosphate + phosphoenolpyruvate + H2O = 3-deoxy-alpha-D-manno-2-octulosonate-8-phosphate + phosphate. It functions in the pathway carbohydrate biosynthesis; 3-deoxy-D-manno-octulosonate biosynthesis; 3-deoxy-D-manno-octulosonate from D-ribulose 5-phosphate: step 2/3. The protein operates within bacterial outer membrane biogenesis; lipopolysaccharide biosynthesis. The protein is 2-dehydro-3-deoxyphosphooctonate aldolase of Geotalea uraniireducens (strain Rf4) (Geobacter uraniireducens).